The sequence spans 94 residues: MSKCSADETPVCCCMDVGTIMDNSDCTASYSRVFANRAEAEQTLAALTEKARSVESEPCKITPTFTEESDGVRLDIDFTFACEAEMLIFQLGLR.

This sequence belongs to the UPF0381 family.

The chain is UPF0381 protein YfcZ (yfcZ) from Escherichia coli O6:H1 (strain CFT073 / ATCC 700928 / UPEC).